The following is a 58-amino-acid chain: Large ribosomal subunit protein bL32c (58 aa).

The protein belongs to the bacterial ribosomal protein bL32 family.

It is found in the plastid. The protein resides in the chloroplast. The polypeptide is Large ribosomal subunit protein bL32c (Chaetosphaeridium globosum (Charophycean green alga)).